A 632-amino-acid chain; its full sequence is Sporulenol synthase (632 aa).

Asp377 serves as the catalytic Proton donor. PFTB repeat units lie at residues Trp395–Ala436, Ile465–Gly505, and Ile513–Ala554.

It belongs to the terpene cyclase/mutase family.

The protein resides in the cell membrane. The catalysed reaction is sporulenol = (R)-tetraprenyl-beta-curcumene + H2O. It functions in the pathway secondary metabolite biosynthesis; hopanoid biosynthesis. In terms of biological role, catalyzes the cyclization of tetraprenyl beta-curcumene into sporulenol. The sequence is that of Sporulenol synthase (sqhC) from Bacillus subtilis (strain 168).